A 37-amino-acid chain; its full sequence is Large ribosomal subunit protein bL36 (37 aa).

It belongs to the bacterial ribosomal protein bL36 family.

This chain is Large ribosomal subunit protein bL36, found in Bordetella bronchiseptica (strain ATCC BAA-588 / NCTC 13252 / RB50) (Alcaligenes bronchisepticus).